The primary structure comprises 63 residues: Large ribosomal subunit protein bL35 (63 aa).

It belongs to the bacterial ribosomal protein bL35 family.

The protein is Large ribosomal subunit protein bL35 of Finegoldia magna (strain ATCC 29328 / DSM 20472 / WAL 2508) (Peptostreptococcus magnus).